Here is a 130-residue protein sequence, read N- to C-terminus: Con-Ins G2 (130 aa).

A signal peptide spans 1–24 (MTTSSYFLLVALGLLLYVRQSFST). 4 cysteine pairs are disulfide-bonded: Cys29-Cys100, Cys41-Cys103, Cys53-Cys116, and Cys102-Cys107. Pro34 carries the 4-hydroxyproline; partial modification. Residues 54-74 (EEEEARRGGTNDGGKKRRRAS) form a disordered region. Residues 59–92 (RRGGTNDGGKKRRRASPLWKRRRFLSMLKARAKR) constitute a propeptide, c peptide. Glu111 is modified (4-carboxyglutamate; partial).

The protein belongs to the insulin family. As to quaternary structure, heterodimer of A and B chains; disulfide-linked. In terms of tissue distribution, expressed by the venom gland.

Its subcellular location is the secreted. In terms of biological role, this venom insulin, from a fish-hunting cone snail, facilitates prey capture by rapidly inducing hypoglycemic shock. Intraperitoneal injection of this peptide into zebrafish lowers blood glucose with the same potency than human insulin. In vivo, when applied to water, this peptide reduces overall locomotor activity of zebrafish larvae, observed as a significant decrease in the percentage of time spent swimming and movement frequency. This chain is Con-Ins G2, found in Conus geographus (Geography cone).